The sequence spans 121 residues: Fluoride-specific ion channel FluC (121 aa).

Transmembrane regions (helical) follow at residues 5 to 25 (LLIF…TISI), 33 to 53 (FPWG…VFYT), 66 to 83 (LMLT…STFS), and 98 to 118 (FFTY…LGIW). Na(+) is bound by residues Gly-74 and Thr-77.

Belongs to the fluoride channel Fluc/FEX (TC 1.A.43) family.

The protein localises to the cell inner membrane. It carries out the reaction fluoride(in) = fluoride(out). Its activity is regulated as follows. Na(+) is not transported, but it plays an essential structural role and its presence is essential for fluoride channel function. In terms of biological role, fluoride-specific ion channel. Important for reducing fluoride concentration in the cell, thus reducing its toxicity. This chain is Fluoride-specific ion channel FluC, found in Phocaeicola vulgatus (strain ATCC 8482 / DSM 1447 / JCM 5826 / CCUG 4940 / NBRC 14291 / NCTC 11154) (Bacteroides vulgatus).